Reading from the N-terminus, the 574-residue chain is Ankyrin repeat protein B19 (574 aa).

ANK repeat units follow at residues 56–87 (TGYTALHCYLYNNYFTNDVLKILLNHGVDVTM), 135–164 (IKSRYMLLKEEDIDENIVSTLLDKGIDPNF), 167–213 (DGYT…NLNA), 217–249 (CGNTPFHLYLSIEMCNNIHMTKMLLTFNPNFEI), 253–285 (HGLTPILCYITSDYIQHDILVMLIHHYETNVGE), and 327–356 (EGKTLLHVACEYNNTHVIDYLIRINGDINA). Residues 541 to 574 (NCLLTLLPSEIIYEILYMLTINDLYNISYPPTKV) form the F-box domain.

The protein belongs to the poxvirinae B18 protein family.

This Vaccinia virus (strain Western Reserve) (VACV) protein is Ankyrin repeat protein B19.